We begin with the raw amino-acid sequence, 124 residues long: uncharacterized protein (124 aa).

3 helical membrane-spanning segments follow: residues 14–34 (KAIV…YGWQ), 41–61 (FSYG…IIFY), and 85–105 (MVFI…AFFV).

Its subcellular location is the cell membrane. This is an uncharacterized protein from Haemophilus influenzae (strain ATCC 51907 / DSM 11121 / KW20 / Rd).